Here is a 310-residue protein sequence, read N- to C-terminus: p-hydroxybenzoic acid efflux pump subunit AaeA (310 aa).

The helical transmembrane segment at 12–32 threads the bilayer; the sequence is AITLVLVILAFIAIFRAWVYY.

Belongs to the membrane fusion protein (MFP) (TC 8.A.1) family.

Its subcellular location is the cell inner membrane. Forms an efflux pump with AaeB. The polypeptide is p-hydroxybenzoic acid efflux pump subunit AaeA (Salmonella heidelberg (strain SL476)).